The chain runs to 215 residues: Cytochrome b6 (215 aa).

Residues Ile32–Phe52 form a helical membrane-spanning segment. Residue Cys35 participates in heme c binding. Residues His86 and His100 each coordinate heme b. Helical transmembrane passes span Ala90–Phe110, Leu116–Tyr136, and Leu186–Ile206. Residues His187 and His202 each coordinate heme b.

This sequence belongs to the cytochrome b family. PetB subfamily. The 4 large subunits of the cytochrome b6-f complex are cytochrome b6, subunit IV (17 kDa polypeptide, PetD), cytochrome f and the Rieske protein, while the 4 small subunits are PetG, PetL, PetM and PetN. The complex functions as a dimer. The cofactor is heme b. It depends on heme c as a cofactor.

The protein resides in the plastid. Its subcellular location is the chloroplast thylakoid membrane. Component of the cytochrome b6-f complex, which mediates electron transfer between photosystem II (PSII) and photosystem I (PSI), cyclic electron flow around PSI, and state transitions. This is Cytochrome b6 from Lotus japonicus (Lotus corniculatus var. japonicus).